Here is a 330-residue protein sequence, read N- to C-terminus: Beta-ketoacyl-[acyl-carrier-protein] synthase III (330 aa).

Active-site residues include C114 and H255. Residues 256–260 (QANQR) form an ACP-binding region. The active site involves N285.

It belongs to the thiolase-like superfamily. FabH family. In terms of assembly, homodimer.

The protein resides in the cytoplasm. It carries out the reaction malonyl-[ACP] + acetyl-CoA + H(+) = 3-oxobutanoyl-[ACP] + CO2 + CoA. The protein operates within lipid metabolism; fatty acid biosynthesis. In terms of biological role, catalyzes the condensation reaction of fatty acid synthesis by the addition to an acyl acceptor of two carbons from malonyl-ACP. Catalyzes the first condensation reaction which initiates fatty acid synthesis and may therefore play a role in governing the total rate of fatty acid production. Possesses both acetoacetyl-ACP synthase and acetyl transacylase activities. Its substrate specificity determines the biosynthesis of branched-chain and/or straight-chain of fatty acids. This is Beta-ketoacyl-[acyl-carrier-protein] synthase III from Trichormus variabilis (strain ATCC 29413 / PCC 7937) (Anabaena variabilis).